Here is a 236-residue protein sequence, read N- to C-terminus: Leucyl/phenylalanyl-tRNA--protein transferase (236 aa).

It belongs to the L/F-transferase family.

The protein resides in the cytoplasm. It carries out the reaction N-terminal L-lysyl-[protein] + L-leucyl-tRNA(Leu) = N-terminal L-leucyl-L-lysyl-[protein] + tRNA(Leu) + H(+). The catalysed reaction is N-terminal L-arginyl-[protein] + L-leucyl-tRNA(Leu) = N-terminal L-leucyl-L-arginyl-[protein] + tRNA(Leu) + H(+). The enzyme catalyses L-phenylalanyl-tRNA(Phe) + an N-terminal L-alpha-aminoacyl-[protein] = an N-terminal L-phenylalanyl-L-alpha-aminoacyl-[protein] + tRNA(Phe). In terms of biological role, functions in the N-end rule pathway of protein degradation where it conjugates Leu, Phe and, less efficiently, Met from aminoacyl-tRNAs to the N-termini of proteins containing an N-terminal arginine or lysine. This is Leucyl/phenylalanyl-tRNA--protein transferase from Yersinia enterocolitica serotype O:8 / biotype 1B (strain NCTC 13174 / 8081).